The chain runs to 337 residues: Anthranilate phosphoribosyltransferase (337 aa).

5-phospho-alpha-D-ribose 1-diphosphate contacts are provided by residues Gly-82, 85-86 (GD), Thr-90, 92-95 (NIST), 110-118 (KHGGRSVSS), and Ser-122. Position 82 (Gly-82) interacts with anthranilate. A Mg(2+)-binding site is contributed by Ser-94. An anthranilate-binding site is contributed by Arg-168. Positions 226 and 227 each coordinate Mg(2+).

This sequence belongs to the anthranilate phosphoribosyltransferase family. Homodimer. It depends on Mg(2+) as a cofactor.

It carries out the reaction N-(5-phospho-beta-D-ribosyl)anthranilate + diphosphate = 5-phospho-alpha-D-ribose 1-diphosphate + anthranilate. The protein operates within amino-acid biosynthesis; L-tryptophan biosynthesis; L-tryptophan from chorismate: step 2/5. In terms of biological role, catalyzes the transfer of the phosphoribosyl group of 5-phosphorylribose-1-pyrophosphate (PRPP) to anthranilate to yield N-(5'-phosphoribosyl)-anthranilate (PRA). The polypeptide is Anthranilate phosphoribosyltransferase (Francisella tularensis subsp. mediasiatica (strain FSC147)).